The following is a 760-amino-acid chain: 5-methyltetrahydropteroyltriglutamate--homocysteine methyltransferase (760 aa).

5-methyltetrahydropteroyltri-L-glutamate contacts are provided by residues 17–20 and Lys-118; that span reads RELK. L-homocysteine contacts are provided by residues 436-438 and Glu-489; that span reads IGS. L-methionine-binding positions include 436–438 and Glu-489; that span reads IGS. 5-methyltetrahydropteroyltri-L-glutamate is bound by residues 520–521 and Trp-566; that span reads RC. An L-homocysteine-binding site is contributed by Asp-604. Asp-604 is an L-methionine binding site. Glu-610 is a 5-methyltetrahydropteroyltri-L-glutamate binding site. 3 residues coordinate Zn(2+): His-646, Cys-648, and Glu-670. Residue His-699 is the Proton donor of the active site. Cys-731 contributes to the Zn(2+) binding site.

This sequence belongs to the vitamin-B12 independent methionine synthase family. Zn(2+) serves as cofactor.

The enzyme catalyses 5-methyltetrahydropteroyltri-L-glutamate + L-homocysteine = tetrahydropteroyltri-L-glutamate + L-methionine. It participates in amino-acid biosynthesis; L-methionine biosynthesis via de novo pathway; L-methionine from L-homocysteine (MetE route): step 1/1. In terms of biological role, catalyzes the transfer of a methyl group from 5-methyltetrahydrofolate to homocysteine resulting in methionine formation. The sequence is that of 5-methyltetrahydropteroyltriglutamate--homocysteine methyltransferase from Vibrio harveyi (Beneckea harveyi).